Reading from the N-terminus, the 853-residue chain is Aminotransferase PigE (853 aa).

Pyridoxal 5'-phosphate is bound at residue 503 to 504 (GT). N6-(pyridoxal phosphate)lysine is present on lysine 645. Threonine 680 lines the pyridoxal 5'-phosphate pocket.

The protein belongs to the class-III pyridoxal-phosphate-dependent aminotransferase family. Homodimer. Pyridoxal 5'-phosphate is required as a cofactor.

Its pathway is antibiotic biosynthesis; prodigiosin biosynthesis. Its function is as follows. Involved in the biosynthesis of 2-methyl-3-n-amyl-pyrrole (MAP), one of the terminal products involved in the biosynthesis of the red antibiotic prodigiosin (Pig). Catalyzes the transamination to the aldehyde group of 3-acetyloctanal, resulting in an aminoketone, which spontaneously cyclizes to yield the dihydro form of MAP (H2MAP). This Serratia sp. (strain ATCC 39006) (Prodigiosinella confusarubida) protein is Aminotransferase PigE.